A 250-amino-acid chain; its full sequence is 5-oxoprolinase subunit A (250 aa).

It belongs to the LamB/PxpA family. As to quaternary structure, forms a complex composed of PxpA, PxpB and PxpC.

It carries out the reaction 5-oxo-L-proline + ATP + 2 H2O = L-glutamate + ADP + phosphate + H(+). In terms of biological role, catalyzes the cleavage of 5-oxoproline to form L-glutamate coupled to the hydrolysis of ATP to ADP and inorganic phosphate. This chain is 5-oxoprolinase subunit A, found in Staphylococcus aureus (strain NCTC 8325 / PS 47).